Here is a 117-residue protein sequence, read N- to C-terminus: Large ribosomal subunit protein bL20 (117 aa).

It belongs to the bacterial ribosomal protein bL20 family.

In terms of biological role, binds directly to 23S ribosomal RNA and is necessary for the in vitro assembly process of the 50S ribosomal subunit. It is not involved in the protein synthesizing functions of that subunit. The sequence is that of Large ribosomal subunit protein bL20 from Acetivibrio thermocellus (strain ATCC 27405 / DSM 1237 / JCM 9322 / NBRC 103400 / NCIMB 10682 / NRRL B-4536 / VPI 7372) (Clostridium thermocellum).